Reading from the N-terminus, the 282-residue chain is ESX-1 secretion-associated protein EspG1 (282 aa).

The protein belongs to the EspG family. Interacts specifically with ESX-1-dependent PE/PPE proteins.

It localises to the cytoplasm. Its function is as follows. Part of the ESX-1 / type VII specialized secretion system (T7SS), which exports several proteins including EsxA and EsxB. Specific chaperone for cognate PE/PPE proteins, plays an important role in preventing aggregation of PE/PPE dimers. Also plays a role in DNA conjugation, in at least recipient strain. The chain is ESX-1 secretion-associated protein EspG1 from Mycolicibacterium smegmatis (strain ATCC 700084 / mc(2)155) (Mycobacterium smegmatis).